The chain runs to 476 residues: Bifunctional protein HldE (476 aa).

The ribokinase stretch occupies residues 1-318; sequence MKVTLPEFER…ENAVRGRADT (318 aa). 195 to 198 contributes to the ATP binding site; it reads NLSE. Residue aspartate 264 is part of the active site. Residues 344–476 form a cytidylyltransferase region; the sequence is MTNGVFDILH…IIKKIQKDSQ (133 aa).

This sequence in the N-terminal section; belongs to the carbohydrate kinase PfkB family. In the C-terminal section; belongs to the cytidylyltransferase family. Homodimer.

It carries out the reaction D-glycero-beta-D-manno-heptose 7-phosphate + ATP = D-glycero-beta-D-manno-heptose 1,7-bisphosphate + ADP + H(+). The enzyme catalyses D-glycero-beta-D-manno-heptose 1-phosphate + ATP + H(+) = ADP-D-glycero-beta-D-manno-heptose + diphosphate. It participates in nucleotide-sugar biosynthesis; ADP-L-glycero-beta-D-manno-heptose biosynthesis; ADP-L-glycero-beta-D-manno-heptose from D-glycero-beta-D-manno-heptose 7-phosphate: step 1/4. The protein operates within nucleotide-sugar biosynthesis; ADP-L-glycero-beta-D-manno-heptose biosynthesis; ADP-L-glycero-beta-D-manno-heptose from D-glycero-beta-D-manno-heptose 7-phosphate: step 3/4. Its function is as follows. Catalyzes the phosphorylation of D-glycero-D-manno-heptose 7-phosphate at the C-1 position to selectively form D-glycero-beta-D-manno-heptose-1,7-bisphosphate. Functionally, catalyzes the ADP transfer from ATP to D-glycero-beta-D-manno-heptose 1-phosphate, yielding ADP-D-glycero-beta-D-manno-heptose. The polypeptide is Bifunctional protein HldE (Enterobacter sp. (strain 638)).